Reading from the N-terminus, the 359-residue chain is uncharacterized protein (359 aa).

Disordered regions lie at residues 90–117 (QESPVRGMSPAPNGAKVPPRPHSEPSRK), 132–161 (IKKEEIKAKRPPSPPKACSTPGSCSSGMTS), and 235–359 (TSME…THRR). A compositionally biased stretch (polar residues) spans 151–161 (TPGSCSSGMTS). The span at 245–259 (KPPTVKSPPTVKLPP) shows a compositional bias: low complexity. The span at 286-299 (EENKEVPKEAEHKP) shows a compositional bias: basic and acidic residues.

This is an uncharacterized protein from Homo sapiens (Human).